Here is a 988-residue protein sequence, read N- to C-terminus: Transposase for transposon Tn21 (988 aa).

The segment at 672-696 (GDGTTSSSDEQNFRTASKAKSTGHI) is disordered. Residues 674-695 (GTTSSSDEQNFRTASKAKSTGH) show a composition bias toward polar residues.

Belongs to the transposase 7 family.

Its function is as follows. Required for transposition of transposon Tn21. This Escherichia coli protein is Transposase for transposon Tn21 (tnpA).